The sequence spans 367 residues: tRNA/tmRNA (uracil-C(5))-methyltransferase (367 aa).

5 residues coordinate S-adenosyl-L-methionine: Gln-190, Tyr-218, Asn-223, Glu-239, and Asp-299. The active-site Nucleophile is the Cys-324. Glu-358 acts as the Proton acceptor in catalysis.

This sequence belongs to the class I-like SAM-binding methyltransferase superfamily. RNA M5U methyltransferase family. TrmA subfamily.

It catalyses the reaction uridine(54) in tRNA + S-adenosyl-L-methionine = 5-methyluridine(54) in tRNA + S-adenosyl-L-homocysteine + H(+). It carries out the reaction uridine(341) in tmRNA + S-adenosyl-L-methionine = 5-methyluridine(341) in tmRNA + S-adenosyl-L-homocysteine + H(+). Functionally, dual-specificity methyltransferase that catalyzes the formation of 5-methyluridine at position 54 (m5U54) in all tRNAs, and that of position 341 (m5U341) in tmRNA (transfer-mRNA). This chain is tRNA/tmRNA (uracil-C(5))-methyltransferase, found in Dickeya chrysanthemi (strain Ech1591) (Dickeya zeae (strain Ech1591)).